We begin with the raw amino-acid sequence, 512 residues long: Sucrose-6-phosphate hydrolase (512 aa).

Residues 40–43, Gln-59, Trp-67, 102–103, 165–166, Glu-229, and Trp-311 contribute to the substrate site; these read WMND, FS, and RD. Asp-43 is an active-site residue.

This sequence belongs to the glycosyl hydrolase 32 family.

It localises to the cytoplasm. It carries out the reaction Hydrolysis of terminal non-reducing beta-D-fructofuranoside residues in beta-D-fructofuranosides.. Its pathway is glycan biosynthesis; sucrose metabolism. The chain is Sucrose-6-phosphate hydrolase (sacA) from Zymomonas mobilis subsp. mobilis (strain ATCC 10988 / DSM 424 / LMG 404 / NCIMB 8938 / NRRL B-806 / ZM1).